A 458-amino-acid chain; its full sequence is Probable beta-eliminating lyase (458 aa).

The residue at position 257 (K257) is an N6-(pyridoxal phosphate)lysine.

Belongs to the beta-eliminating lyase family. Pyridoxal 5'-phosphate is required as a cofactor.

The chain is Probable beta-eliminating lyase from Trichomonas vaginalis (strain ATCC PRA-98 / G3).